The sequence spans 516 residues: MASFSLPHSATYFPSHSETSLKPHSAASFTVRCTSASPAVPPQTPQKPRRSPDENIRDEARRRPHQLQNLSARYVPFNAPPSSTESYSLDEIVYRSQSGALLDVQHDFAALKRYDGEFWRNLFDSRVGKTNWPYGSGVWSKKEWVLPEIDDDDIVSAFEGNSNLFWAERFGKQYLQMNDLWVKHCGISHTGSFKDLGMSVLVSQVNRLRKMNKPVIGVGCASTGDTSAALSAYCASAGIPSIVFLPADKISMAQLVQPIANGAFVLSIDTDFDGCMHLIREVTAELPIYLANSLNSLRLEGQKTAAIEILQQFNWQVPDWVIVPGGNLGNIYAFYKGFHMCKELGLVDRIPRLVCAQAANANPLYLHYKSGFKEDFNPLKANTTFASAIQIGDPVSIDRAVYALKKSNGIVEEATEEELMDATALADSTGMFICPHTGVALTALMKLRKSGVIGANDRTVVVSTAHGLKFTQSKIDYHSKNIKEMACRLANPPVKVKAKFGSVMDVLKEYLKSNDK.

A chloroplast-targeting transit peptide spans 1–33 (MASFSLPHSATYFPSHSETSLKPHSAASFTVRC). Polar residues predominate over residues 1–37 (MASFSLPHSATYFPSHSETSLKPHSAASFTVRCTSAS). A disordered region spans residues 1–55 (MASFSLPHSATYFPSHSETSLKPHSAASFTVRCTSASPAVPPQTPQKPRRSPDEN). S-adenosyl-L-methionine is bound by residues 133 to 135 (PYG), 156 to 158 (SAF), asparagine 163, leucine 164, lysine 172, and asparagine 178. Position 194 is an N6-(pyridoxal phosphate)lysine (lysine 194). Pyridoxal 5'-phosphate-binding positions include 326 to 330 (GNLGN) and threonine 464.

The protein belongs to the threonine synthase family. Homodimer. Requires pyridoxal 5'-phosphate as cofactor.

It is found in the plastid. The protein resides in the chloroplast. It carries out the reaction O-phospho-L-homoserine + H2O = L-threonine + phosphate. It functions in the pathway amino-acid biosynthesis; L-threonine biosynthesis; L-threonine from L-aspartate: step 5/5. Allosterically activated by S-adenosyl-methionine (SAM). Functionally, catalyzes the gamma-elimination of phosphate from L-phosphohomoserine and the beta-addition of water to produce L-threonine. This is Threonine synthase 2, chloroplastic (TS2) from Arabidopsis thaliana (Mouse-ear cress).